A 233-amino-acid polypeptide reads, in one-letter code: MATLLDIEGTVCSISFVHDILFPYALEKLPQLLKNEQFPIKPGGNQTSDLTPYLESFPEEYKQSAQALEDHVIDLTEKNVKAPYLKALQGYIWKSGYQSGEIKAPLYPDAVDYMKRVVDGGNKVFIYSSGSVPAQKLLFGYSSAGDLTPLISDYFDTVNAGPKMEAASYTTILKAIGFEADRVLFLSDNVREIEAAKKAGLRAYVAERPGNAKLTPQEKEDNVIKTSFEGIEI.

Positions 6 and 8 each coordinate Mg(2+). Substrate is bound by residues 128 to 129 and K163; that span reads SS. Position 188 (D188) interacts with Mg(2+).

The protein belongs to the HAD-like hydrolase superfamily. MasA/MtnC family. In terms of assembly, monomer. Requires Mg(2+) as cofactor.

The protein localises to the cytoplasm. Its subcellular location is the nucleus. The enzyme catalyses 5-methylsulfanyl-2,3-dioxopentyl phosphate + H2O = 1,2-dihydroxy-5-(methylsulfanyl)pent-1-en-3-one + phosphate. It functions in the pathway amino-acid biosynthesis; L-methionine biosynthesis via salvage pathway; L-methionine from S-methyl-5-thio-alpha-D-ribose 1-phosphate: step 3/6. The protein operates within amino-acid biosynthesis; L-methionine biosynthesis via salvage pathway; L-methionine from S-methyl-5-thio-alpha-D-ribose 1-phosphate: step 4/6. Its function is as follows. Bifunctional enzyme that catalyzes the enolization of 2,3-diketo-5-methylthiopentyl-1-phosphate (DK-MTP-1-P) into the intermediate 2-hydroxy-3-keto-5-methylthiopentenyl-1-phosphate (HK-MTPenyl-1-P), which is then dephosphorylated to form the acireductone 1,2-dihydroxy-3-keto-5-methylthiopentene (DHK-MTPene). This chain is Enolase-phosphatase E1, found in Yarrowia lipolytica (strain CLIB 122 / E 150) (Yeast).